The chain runs to 456 residues: Cytochrome P450 monooxygenase avaH (456 aa).

Residues 243 to 263 traverse the membrane as a helical segment; sequence LMSYFVSVFLVNVALFNAVSI. Residue cysteine 403 coordinates heme.

This sequence belongs to the cytochrome P450 family. It depends on heme as a cofactor.

The protein localises to the membrane. It functions in the pathway secondary metabolite biosynthesis. In terms of biological role, cytochrome P450 monooxygenase; part of the cluster that mediates the biosynthesis of a highly modified cyclo-arginine-tryptophan dipeptide (cRW). The first step of the pathway is perfornmed by the arginine-containing cyclodipeptide synthase (RCPDS) avaA that acts as the scaffold-generating enzyme and is responsible for formation of the cyclo-Arg-Trp (cRW) diketopiperazine. AvaB then acts as a multifunctional flavoenzyme that is responsible for generating the cyclo-Arg-formylkynurenine DKP, which can be deformylated by avaC. AvaB then further catalyzes an additional N-oxidation followed by cyclization and dehydration. The next step is an N-acetylation of the guanidine group catalyzed by the arginine N-acetyltransferase avaD. The roles of the additional enzymes identified within the ava cluster still have to be determined. This Aspergillus versicolor protein is Cytochrome P450 monooxygenase avaH.